An 845-amino-acid chain; its full sequence is DNA replication licensing factor MCM7 (845 aa).

One can recognise an MCM domain in the interval 410 to 617 (VYNRLAKSIA…DDEKLAEHVT (208 aa)). The ATP site is built by Y423, G463, A465, K466, S467, N568, R593, and R687. The short motif at 592–595 (SRFD) is the Arginine finger element. Residue T811 is modified to Phosphothreonine. The interval 812–845 (DQEDSLVSTPKLAPQTTASANVSAQDSDIDLQDA) is disordered. A Phosphoserine modification is found at S819. The span at 825-837 (PQTTASANVSAQD) shows a compositional bias: polar residues. Position 838 is a phosphoserine (S838).

Belongs to the MCM family. Component of the MCM2-7 complex. The complex forms a toroidal hexameric ring with the proposed subunit order MCM2-MCM6-MCM4-MCM7-MCM3-MCM5; loaded onto DNA, forms a head-head double hexamer. Interacts with CSM1 and MCM10.

It is found in the cytoplasm. The protein localises to the nucleus. It carries out the reaction ATP + H2O = ADP + phosphate + H(+). Functionally, acts as a component of the MCM2-7 complex (MCM complex) which is the putative replicative helicase essential for 'once per cell cycle' DNA replication initiation and elongation in eukaryotic cells. Core component of CDC45-MCM-GINS (CMG) helicase, the molecular machine that unwinds template DNA during replication, and around which the replisome is built. The active ATPase sites in the MCM2-7 ring are formed through the interaction surfaces of two neighboring subunits such that a critical structure of a conserved arginine finger motif is provided in trans relative to the ATP-binding site of the Walker A box of the adjacent subunit. The six ATPase active sites, however, are likely to contribute differentially to the complex helicase activity. Once loaded onto DNA, double hexamers can slide on dsDNA in the absence of ATPase activity. In Saccharomyces cerevisiae (strain ATCC 204508 / S288c) (Baker's yeast), this protein is DNA replication licensing factor MCM7 (MCM7).